Consider the following 97-residue polypeptide: MAESAASITRHLRIHGLVQGVYYRKSMTEAARRLGVQGWVRNRQDGTVEALASGAAPAVQALIDWAHEGPPAARVERVEVAEAPACDAQGFEQRETV.

The Acylphosphatase-like domain occupies 9–95; sequence TRHLRIHGLV…CDAQGFEQRE (87 aa). Active-site residues include R24 and N42.

Belongs to the acylphosphatase family.

It catalyses the reaction an acyl phosphate + H2O = a carboxylate + phosphate + H(+). This is Acylphosphatase (acyP) from Acidovorax sp. (strain JS42).